The primary structure comprises 879 residues: RNA-directed RNA polymerase (879 aa).

Position 259 to 266 (259 to 266 (GLPYVGRT)) interacts with GTP. Positions 398–598 (LVYADNIYIV…DKERLFCSAA (201 aa)) constitute a RdRp catalytic domain. The segment at 846–879 (GAGTSRPMGMEAPTRSKNAVKMAKRRQRQKESRQ) is disordered.

Interacts with VP3 in the cytoplasm. In terms of processing, may exist in multiple phosphorylated forms.

The protein localises to the virion. The enzyme catalyses RNA(n) + a ribonucleoside 5'-triphosphate = RNA(n+1) + diphosphate. Its function is as follows. RNA-dependent RNA polymerase which is found both free and covalently attached to the genomic RNA. May also contain guanylyl and methyl transferase activities. This chain is RNA-directed RNA polymerase (VP1), found in Gallus gallus (Chicken).